Reading from the N-terminus, the 404-residue chain is Cysteine desulfurase IscS (404 aa).

Pyridoxal 5'-phosphate-binding positions include 75–76, Asn155, Gln183, and 203–205; these read AT and SAH. At Lys206 the chain carries N6-(pyridoxal phosphate)lysine. Thr243 is a pyridoxal 5'-phosphate binding site. Cys328 acts as the Cysteine persulfide intermediate in catalysis. Cys328 lines the [2Fe-2S] cluster pocket.

The protein belongs to the class-V pyridoxal-phosphate-dependent aminotransferase family. NifS/IscS subfamily. In terms of assembly, homodimer. Forms a heterotetramer with IscU, interacts with other sulfur acceptors. It depends on pyridoxal 5'-phosphate as a cofactor.

Its subcellular location is the cytoplasm. The enzyme catalyses (sulfur carrier)-H + L-cysteine = (sulfur carrier)-SH + L-alanine. It participates in cofactor biosynthesis; iron-sulfur cluster biosynthesis. In terms of biological role, master enzyme that delivers sulfur to a number of partners involved in Fe-S cluster assembly, tRNA modification or cofactor biosynthesis. Catalyzes the removal of elemental sulfur atoms from cysteine to produce alanine. Functions as a sulfur delivery protein for Fe-S cluster synthesis onto IscU, an Fe-S scaffold assembly protein, as well as other S acceptor proteins. The protein is Cysteine desulfurase IscS of Pseudomonas syringae pv. syringae (strain B728a).